Here is a 174-residue protein sequence, read N- to C-terminus: NADH-ubiquinone oxidoreductase chain 6 (174 aa).

The next 4 membrane-spanning stretches (helical) occupy residues 24-44 (LALG…SGLM), 53-73 (ILFL…TSLA), 82-102 (IKLT…SMIL), and 143-163 (FVTI…VKIT).

The protein belongs to the complex I subunit 6 family.

It localises to the mitochondrion membrane. It carries out the reaction a ubiquinone + NADH + 5 H(+)(in) = a ubiquinol + NAD(+) + 4 H(+)(out). In terms of biological role, core subunit of the mitochondrial membrane respiratory chain NADH dehydrogenase (Complex I) that is believed to belong to the minimal assembly required for catalysis. Complex I functions in the transfer of electrons from NADH to the respiratory chain. The immediate electron acceptor for the enzyme is believed to be ubiquinone. This chain is NADH-ubiquinone oxidoreductase chain 6 (mt:ND6), found in Drosophila yakuba (Fruit fly).